Consider the following 103-residue polypeptide: Co-chaperonin GroES (103 aa).

This sequence belongs to the GroES chaperonin family. Heptamer of 7 subunits arranged in a ring. Interacts with the chaperonin GroEL.

The protein localises to the cytoplasm. In terms of biological role, together with the chaperonin GroEL, plays an essential role in assisting protein folding. The GroEL-GroES system forms a nano-cage that allows encapsulation of the non-native substrate proteins and provides a physical environment optimized to promote and accelerate protein folding. GroES binds to the apical surface of the GroEL ring, thereby capping the opening of the GroEL channel. In Trichodesmium erythraeum (strain IMS101), this protein is Co-chaperonin GroES.